A 728-amino-acid chain; its full sequence is FAD-dependent monooxygenase avaB (728 aa).

A helical transmembrane segment spans residues 17–37 (VIDLLLTFFFYSGLYGLIAAK). The segment covering 50-64 (NQQCENTDDVPQSFQ) has biased composition (polar residues). The interval 50-72 (NQQCENTDDVPQSFQRPRDTRST) is disordered. Val168 is an FAD binding site. 490-491 (DL) lines the NADP(+) pocket.

Belongs to the FAD-binding monooxygenase family. FAD serves as cofactor.

It localises to the membrane. It functions in the pathway secondary metabolite metabolism. Functionally, multifunctional FAD-dependent monooxygenase; part of the cluster that mediates the biosynthesis of a highly modified cyclo-arginine-tryptophan dipeptide (cRW). Within the pathway, avaB uses the avaA cyclo-arginine-tryptophan dipeptide (cRW) as substrate to generate the cyclo-Arg-formylkynurenine diketopiperazine (DKP). AvaB also catalyzes an additional N-oxidation of the avaC product which is followed by cyclization and dehydration. The first step of the pathway is perfornmed by the arginine-containing cyclodipeptide synthase (RCPDS) avaA that acts as the scaffold-generating enzyme and is responsible for formation of the cyclo-Arg-Trp (cRW) diketopiperazine. AvaB then acts as a multifunctional flavoenzyme that is responsible for generating the cyclo-Arg-formylkynurenine DKP, which can be deformylated by avaC. AvaB then further catalyzes an additional N-oxidation followed by cyclization and dehydration. The next step is an N-acetylation of the guanidine group catalyzed by the arginine N-acetyltransferase avaD. The roles of the additional enzymes identified within the ava cluster still have to be determined. In Aspergillus versicolor, this protein is FAD-dependent monooxygenase avaB.